The following is a 112-amino-acid chain: Ribonuclease P protein component (112 aa).

Belongs to the RnpA family. As to quaternary structure, consists of a catalytic RNA component (M1 or rnpB) and a protein subunit.

It carries out the reaction Endonucleolytic cleavage of RNA, removing 5'-extranucleotides from tRNA precursor.. Functionally, RNaseP catalyzes the removal of the 5'-leader sequence from pre-tRNA to produce the mature 5'-terminus. It can also cleave other RNA substrates such as 4.5S RNA. The protein component plays an auxiliary but essential role in vivo by binding to the 5'-leader sequence and broadening the substrate specificity of the ribozyme. The polypeptide is Ribonuclease P protein component (Mycoplasma mobile (strain ATCC 43663 / 163K / NCTC 11711) (Mesomycoplasma mobile)).